The following is a 965-amino-acid chain: 26S proteasome regulatory subunit rpn2 (965 aa).

10 PC repeats span residues 385 to 418, 424 to 457, 459 to 493, 494 to 528, 530 to 563, 564 to 599, 600 to 632, 634 to 668, 669 to 699, and 712 to 744; these read TATA…PSSS, GAFY…EIVQ, GLLL…VAGS, AAGI…EKII, GLGI…TLRY, AGMF…DVRR, AAVC…PHVR, GSAI…FVRQ, GAMI…FEQV, and GATL…SAIV. Disordered stretches follow at residues 826 to 883 and 934 to 965; these read AKRA…KSET and NRDA…DDDD. Basic and acidic residues-rich tracts occupy residues 827 to 856 and 874 to 883; these read KRAE…KEAT and SKKEEPKSET. Residues 945–965 show a composition bias toward acidic residues; the sequence is EPGEQEASPPEDFEYPFDDDD. Phosphoserine is present on Ser-952.

Belongs to the proteasome subunit S1 family.

In terms of biological role, acts as a regulatory subunit of the 26S proteasome which is involved in the ATP-dependent degradation of ubiquitinated proteins. This is 26S proteasome regulatory subunit rpn2 (rpn2) from Schizosaccharomyces pombe (strain 972 / ATCC 24843) (Fission yeast).